Reading from the N-terminus, the 325-residue chain is Probable NADH kinase (325 aa).

It belongs to the NAD kinase family. In terms of assembly, homodimer.

The protein resides in the cytoplasm. The enzyme catalyses NADH + ATP = ADP + NADPH + H(+). Its function is as follows. Key source of the cellular reductant NADPH which is an important antioxidant factor. The chain is Probable NADH kinase from Oryza sativa subsp. japonica (Rice).